Here is a 208-residue protein sequence, read N- to C-terminus: ATP-dependent Clp protease proteolytic subunit (208 aa).

Ser105 functions as the Nucleophile in the catalytic mechanism. Residue His130 is part of the active site.

Belongs to the peptidase S14 family. As to quaternary structure, fourteen ClpP subunits assemble into 2 heptameric rings which stack back to back to give a disk-like structure with a central cavity, resembling the structure of eukaryotic proteasomes.

It is found in the cytoplasm. It catalyses the reaction Hydrolysis of proteins to small peptides in the presence of ATP and magnesium. alpha-casein is the usual test substrate. In the absence of ATP, only oligopeptides shorter than five residues are hydrolyzed (such as succinyl-Leu-Tyr-|-NHMec, and Leu-Tyr-Leu-|-Tyr-Trp, in which cleavage of the -Tyr-|-Leu- and -Tyr-|-Trp bonds also occurs).. Functionally, cleaves peptides in various proteins in a process that requires ATP hydrolysis. Has a chymotrypsin-like activity. Plays a major role in the degradation of misfolded proteins. The chain is ATP-dependent Clp protease proteolytic subunit from Xanthomonas axonopodis pv. citri (strain 306).